Consider the following 165-residue polypeptide: Endoribonuclease YbeY (165 aa).

Residues His130, His134, and His140 each contribute to the Zn(2+) site.

It belongs to the endoribonuclease YbeY family. Zn(2+) serves as cofactor.

The protein localises to the cytoplasm. Its function is as follows. Single strand-specific metallo-endoribonuclease involved in late-stage 70S ribosome quality control and in maturation of the 3' terminus of the 16S rRNA. The protein is Endoribonuclease YbeY of Streptococcus pneumoniae serotype 2 (strain D39 / NCTC 7466).